A 306-amino-acid polypeptide reads, in one-letter code: Sulfate adenylyltransferase subunit 2 (306 aa).

Belongs to the PAPS reductase family. CysD subfamily. In terms of assembly, heterodimer composed of CysD, the smaller subunit, and CysN.

The catalysed reaction is sulfate + ATP + H(+) = adenosine 5'-phosphosulfate + diphosphate. The protein operates within sulfur metabolism; hydrogen sulfide biosynthesis; sulfite from sulfate: step 1/3. Functionally, with CysN forms the ATP sulfurylase (ATPS) that catalyzes the adenylation of sulfate producing adenosine 5'-phosphosulfate (APS) and diphosphate, the first enzymatic step in sulfur assimilation pathway. APS synthesis involves the formation of a high-energy phosphoric-sulfuric acid anhydride bond driven by GTP hydrolysis by CysN coupled to ATP hydrolysis by CysD. The sequence is that of Sulfate adenylyltransferase subunit 2 from Brucella anthropi (strain ATCC 49188 / DSM 6882 / CCUG 24695 / JCM 21032 / LMG 3331 / NBRC 15819 / NCTC 12168 / Alc 37) (Ochrobactrum anthropi).